We begin with the raw amino-acid sequence, 137 residues long: Large ribosomal subunit protein uL16 (137 aa).

This sequence belongs to the universal ribosomal protein uL16 family. Part of the 50S ribosomal subunit.

Binds 23S rRNA and is also seen to make contacts with the A and possibly P site tRNAs. This chain is Large ribosomal subunit protein uL16, found in Halorhodospira halophila (strain DSM 244 / SL1) (Ectothiorhodospira halophila (strain DSM 244 / SL1)).